The following is a 160-amino-acid chain: Transcription elongation factor GreA (160 aa).

Residues 49–77 adopt a coiled-coil conformation; sequence SEYQSAKDEQAFVEGRIQTLKNMIDNAEI.

This sequence belongs to the GreA/GreB family.

Its function is as follows. Necessary for efficient RNA polymerase transcription elongation past template-encoded arresting sites. The arresting sites in DNA have the property of trapping a certain fraction of elongating RNA polymerases that pass through, resulting in locked ternary complexes. Cleavage of the nascent transcript by cleavage factors such as GreA or GreB allows the resumption of elongation from the new 3'terminus. GreA releases sequences of 2 to 3 nucleotides. The chain is Transcription elongation factor GreA from Leuconostoc mesenteroides subsp. mesenteroides (strain ATCC 8293 / DSM 20343 / BCRC 11652 / CCM 1803 / JCM 6124 / NCDO 523 / NBRC 100496 / NCIMB 8023 / NCTC 12954 / NRRL B-1118 / 37Y).